A 96-amino-acid chain; its full sequence is Large ribosomal subunit protein uL23 (96 aa).

It belongs to the universal ribosomal protein uL23 family. Part of the 50S ribosomal subunit. Contacts protein L29, and trigger factor when it is bound to the ribosome.

One of the early assembly proteins it binds 23S rRNA. One of the proteins that surrounds the polypeptide exit tunnel on the outside of the ribosome. Forms the main docking site for trigger factor binding to the ribosome. This Finegoldia magna (strain ATCC 29328 / DSM 20472 / WAL 2508) (Peptostreptococcus magnus) protein is Large ribosomal subunit protein uL23.